The chain runs to 201 residues: Two-component response regulator ORR9 (201 aa).

Residues 10-142 form the Response regulatory domain; the sequence is HVLAVDDSLP…DMSKLKPHIL (133 aa). At Asp75 the chain carries 4-aspartylphosphate. The interval 149–201 is disordered; the sequence is HYQQEQNLQSNSESNNSSNPTSENSSSSTSSNSHKRKAVDEEILPHTIRPRHS. Positions 158–180 are enriched in low complexity; that stretch reads SNSESNNSSNPTSENSSSSTSSN.

This sequence belongs to the ARR family. Type-A subfamily. Post-translationally, two-component system major event consists of a His-to-Asp phosphorelay between a sensor histidine kinase (HK) and a response regulator (RR). In plants, the His-to-Asp phosphorelay involves an additional intermediate named Histidine-containing phosphotransfer protein (HPt). This multistep phosphorelay consists of a His-Asp-His-Asp sequential transfer of a phosphate group between first a His and an Asp of the HK protein, followed by the transfer to a conserved His of the HPt protein and finally the transfer to an Asp in the receiver domain of the RR protein.

In terms of biological role, functions as a response regulator involved in His-to-Asp phosphorelay signal transduction system. Phosphorylation of the Asp residue in the receiver domain activates the ability of the protein to promote the transcription of target genes. Type-A response regulators seem to act as negative regulators of the cytokinin signaling. The polypeptide is Two-component response regulator ORR9 (Oryza sativa subsp. japonica (Rice)).